Consider the following 187-residue polypeptide: Core-binding factor subunit beta (187 aa).

S10 carries the phosphoserine; by CK2 modification. The interval 139–187 (AQQAFEEARRRTREFEDRDRSHREEMEARRQQDPSPGSNLGGGDDLKLR) is disordered. Basic and acidic residues predominate over residues 144 to 170 (EEARRRTREFEDRDRSHREEMEARRQQ). S159 bears the Phosphoserine; by PKC mark.

It belongs to the CBF-beta family. In terms of assembly, heterodimer with RUNX1, RUNX2 and RUNX3. Interacts with COPRS. Found in a complex with PRMT5 and RUNX1. Expressed in all tissues tested. Highest level in thymus, but also abundantly expressed in muscle, lung and brain.

The protein localises to the nucleus. In terms of biological role, forms the heterodimeric complex core-binding factor (CBF) with RUNX family proteins (RUNX1, RUNX2, and RUNX3). RUNX members modulate the transcription of their target genes through recognizing the core consensus binding sequence 5'-TGTGGT-3', or very rarely, 5'-TGCGGT-3', within their regulatory regions via their runt domain, while CBFB is a non-DNA-binding regulatory subunit that allosterically enhances the sequence-specific DNA-binding capacity of RUNX. The heterodimers bind to the core site of a number of enhancers and promoters, including murine leukemia virus, polyomavirus enhancer, T-cell receptor enhancers, LCK, IL3 and GM-CSF promoters. CBF complexes repress ZBTB7B transcription factor during cytotoxic (CD8+) T cell development. They bind to RUNX-binding sequence within the ZBTB7B locus acting as transcriptional silencer and allowing for cytotoxic T cell differentiation. The protein is Core-binding factor subunit beta (Cbfb) of Mus musculus (Mouse).